The following is a 410-amino-acid chain: NADH-quinone oxidoreductase subunit H (410 aa).

Helical transmembrane passes span 16 to 36 (LILA…LAAI), 84 to 104 (WIYL…FAVI), 124 to 144 (LPVA…GIVL), 165 to 185 (VISY…YAGT), 198 to 218 (VWFI…MVGE), 260 to 280 (VSAL…PISI), 288 to 308 (WWPL…FMWL), 320 to 340 (FMRL…AIVA), and 353 to 373 (WVTA…LLAW). Positions 384 to 410 (SHSPPAQSSDHGAFPVPPLPVKEPADA) are disordered.

The protein belongs to the complex I subunit 1 family. NDH-1 is composed of 14 different subunits. Subunits NuoA, H, J, K, L, M, N constitute the membrane sector of the complex.

The protein localises to the cell membrane. The enzyme catalyses a quinone + NADH + 5 H(+)(in) = a quinol + NAD(+) + 4 H(+)(out). In terms of biological role, NDH-1 shuttles electrons from NADH, via FMN and iron-sulfur (Fe-S) centers, to quinones in the respiratory chain. The immediate electron acceptor for the enzyme in this species is believed to be menaquinone. Couples the redox reaction to proton translocation (for every two electrons transferred, four hydrogen ions are translocated across the cytoplasmic membrane), and thus conserves the redox energy in a proton gradient. The polypeptide is NADH-quinone oxidoreductase subunit H (Mycolicibacterium gilvum (strain PYR-GCK) (Mycobacterium gilvum (strain PYR-GCK))).